A 202-amino-acid chain; its full sequence is Small ribosomal subunit protein uS4 (202 aa).

Positions 1–13 (MSRYRGPRLRITR) are enriched in basic residues. Residues 1–43 (MSRYRGPRLRITRRLGDLPGLTRKAAKRSHPPGQHGQARRKRS) form a disordered region. In terms of domain architecture, S4 RNA-binding spans 90–152 (NRLDNVCFRL…KASKQLAQAN (63 aa)).

It belongs to the universal ribosomal protein uS4 family. As to quaternary structure, part of the 30S ribosomal subunit. Contacts protein S5. The interaction surface between S4 and S5 is involved in control of translational fidelity.

Its function is as follows. One of the primary rRNA binding proteins, it binds directly to 16S rRNA where it nucleates assembly of the body of the 30S subunit. In terms of biological role, with S5 and S12 plays an important role in translational accuracy. The sequence is that of Small ribosomal subunit protein uS4 from Prochlorococcus marinus (strain NATL2A).